Consider the following 1411-residue polypeptide: DNA-directed RNA polymerase subunit beta' (1411 aa).

The Zn(2+) site is built by C70, C72, C85, and C88. Mg(2+) contacts are provided by D458, D460, and D462. Zn(2+) contacts are provided by C813, C887, C894, and C897. Positions 1384–1411 are disordered; that stretch reads AEAAEMATTGSDEAPEVEGSGVESGSAE.

It belongs to the RNA polymerase beta' chain family. As to quaternary structure, the RNAP catalytic core consists of 2 alpha, 1 beta, 1 beta' and 1 omega subunit. When a sigma factor is associated with the core the holoenzyme is formed, which can initiate transcription. Mg(2+) serves as cofactor. Zn(2+) is required as a cofactor.

It catalyses the reaction RNA(n) + a ribonucleoside 5'-triphosphate = RNA(n+1) + diphosphate. Its function is as follows. DNA-dependent RNA polymerase catalyzes the transcription of DNA into RNA using the four ribonucleoside triphosphates as substrates. The sequence is that of DNA-directed RNA polymerase subunit beta' from Paracidovorax citrulli (strain AAC00-1) (Acidovorax citrulli).